The sequence spans 491 residues: MGANNGKQYGSEGKGSSSISSDVSSSTDHTPTKAQKNVATSEDSDLSMRTLSTPSPALICPPNLPGFQNGRGSSTSSSSITGETVAMVHSPPPTRLTHPLIRLASRPQKEQASIDRLPDHSMVQIFSFLPTNQLCRCARVCRRWYNLAWDPRLWRTIRLTGETINVDRALKVLTRRLCQDTPNVCLMLETVTVSGCRRLTDRGLYTIAQCCPELRRLEVSGCYNISNEAVFDVVSLCPNLEHLDVSGCSKVTCISLTREASIKLSPLHGKQISIRYLDMTDCFVLEDEGLHTIAAHCTQLTHLYLRRCVRLTDEGLRYLVIYCASIKELSVSDCRFVSDFGLREIAKLESRLRYLSIAHCGRVTDVGIRYVAKYCSKLRYLNARGCEGITDHGVEYLAKNCTKLKSLDIGKCPLVSDTGLECLALNCFNLKRLSLKSCESITGQGLQIVAANCFDLQTLNVQDCEVSVEALRFVKRHCKRCVIEHTNPAFF.

The interval 1–79 is disordered; that stretch reads MGANNGKQYG…GRGSSTSSSS (79 aa). Residues 10-26 are compositionally biased toward low complexity; the sequence is GSEGKGSSSISSDVSSS. Over residues 27-55 the composition is skewed to polar residues; it reads TDHTPTKAQKNVATSEDSDLSMRTLSTPS. The 47-residue stretch at 111–157 folds into the F-box domain; the sequence is QASIDRLPDHSMVQIFSFLPTNQLCRCARVCRRWYNLAWDPRLWRTI. LRR repeat units follow at residues 170–195, 196–221, 222–247, 253–281, 282–307, 308–333, 334–359, 360–385, 386–411, 412–437, and 438–463; these read LKVL…TVSG, CRRL…EVSG, CYNI…DVSG, CISL…DMTD, CFVL…YLRR, CVRL…SVSD, CRFV…SIAH, CGRV…NARG, CEGI…DIGK, CPLV…SLKS, and CESI…NVQD.

The protein belongs to the FBXL7 family. In terms of assembly, part of the SCF (SKP1-CUL1-F-box) E3 ubiquitin-protein ligase complex SCF(FBXL7) composed of CUL1, SKP1, RBX1 and FBXL7. Interacts with AURKA; interaction takes place during mitosis but not in interphase. Interacts with BIRC5; this interaction allows BIRC5 to be polyubiquitinated by the SCF(FBXL7) E3 ubiquitin-protein ligase complex.

The protein resides in the cytoplasm. It is found in the cytoskeleton. Its subcellular location is the microtubule organizing center. It localises to the centrosome. The protein operates within protein modification; protein ubiquitination. In terms of biological role, substrate recognition component of a SCF (SKP1-CUL1-F-box protein) E3 ubiquitin-protein ligase complex. During mitosis, it mediates the ubiquitination and subsequent proteasomal degradation of AURKA, causing mitotic arrest. It also regulates mitochondrial function by mediating the ubiquitination and proteasomal degradation of the apoptosis inhibitor BIRC5. The protein is F-box/LRR-repeat protein 7 (FBXL7) of Homo sapiens (Human).